A 324-amino-acid polypeptide reads, in one-letter code: Appendage-associated protein (324 aa).

Positions Met1 to Ala32 are cleaved as a signal peptide. The stretch at Ile195–Lys255 forms a coiled coil.

It localises to the secreted. Functionally, associates with actin filament appendages that are formed in the inclusion appendages of the parasitophorous vacuole during infection of the host erythrocyte. The sequence is that of Appendage-associated protein (aaaP1) from Anaplasma marginale (strain Florida).